A 25-amino-acid chain; its full sequence is Dermaseptin-5.2TR (25 aa).

V25 carries the valine amide modification.

In terms of tissue distribution, expressed by the skin glands.

Its subcellular location is the secreted. Its function is as follows. Has antimicrobial activity. The protein is Dermaseptin-5.2TR of Phyllomedusa trinitatis (Trinidad leaf frog).